The primary structure comprises 302 residues: N(G),N(G)-dimethylarginine dimethylaminohydrolase (302 aa).

Substrate contacts are provided by D102, R127, and R172. The active-site Proton donor is the H201. The Nucleophile role is filled by C295.

Belongs to the DDAH family.

It catalyses the reaction N(omega),N(omega)-dimethyl-L-arginine + H2O = dimethylamine + L-citrulline. The catalysed reaction is N(omega)-methyl-L-arginine + H2O = L-citrulline + methylamine. Its function is as follows. Hydrolyzes N(G),N(G)-dimethyl-L-arginine (ADMA) and N(G)-monomethyl-L-arginine (MMA). The polypeptide is N(G),N(G)-dimethylarginine dimethylaminohydrolase (Mycobacterium tuberculosis (strain ATCC 25618 / H37Rv)).